The primary structure comprises 314 residues: Lipoyl synthase (314 aa).

[4Fe-4S] cluster is bound by residues Cys61, Cys66, Cys72, Cys87, Cys91, Cys94, and Ser301. One can recognise a Radical SAM core domain in the interval 73-290 (FGRGTATFMI…ERIATNLGFS (218 aa)).

This sequence belongs to the radical SAM superfamily. Lipoyl synthase family. The cofactor is [4Fe-4S] cluster.

It localises to the cytoplasm. It carries out the reaction [[Fe-S] cluster scaffold protein carrying a second [4Fe-4S](2+) cluster] + N(6)-octanoyl-L-lysyl-[protein] + 2 oxidized [2Fe-2S]-[ferredoxin] + 2 S-adenosyl-L-methionine + 4 H(+) = [[Fe-S] cluster scaffold protein] + N(6)-[(R)-dihydrolipoyl]-L-lysyl-[protein] + 4 Fe(3+) + 2 hydrogen sulfide + 2 5'-deoxyadenosine + 2 L-methionine + 2 reduced [2Fe-2S]-[ferredoxin]. It functions in the pathway protein modification; protein lipoylation via endogenous pathway; protein N(6)-(lipoyl)lysine from octanoyl-[acyl-carrier-protein]: step 2/2. Its function is as follows. Catalyzes the radical-mediated insertion of two sulfur atoms into the C-6 and C-8 positions of the octanoyl moiety bound to the lipoyl domains of lipoate-dependent enzymes, thereby converting the octanoylated domains into lipoylated derivatives. The chain is Lipoyl synthase from Nitrosomonas eutropha (strain DSM 101675 / C91 / Nm57).